The primary structure comprises 399 residues: Dihydrolipoyllysine-residue succinyltransferase component of 2-oxoglutarate dehydrogenase complex (399 aa).

The Lipoyl-binding domain occupies 2–77 (AIDIKAPTFP…LSGELLGKLT (76 aa)). The residue at position 43 (K43) is an N6-lipoyllysine. Positions 104–141 (ILSPAARKIAEENAIAADSITGTGKGGRVTKEDAVAAA) constitute a Peripheral subunit-binding (PSBD) domain. Active-site residues include H370 and D374.

The protein belongs to the 2-oxoacid dehydrogenase family. Forms a 24-polypeptide structural core with octahedral symmetry. Part of the 2-oxoglutarate dehydrogenase (OGDH) complex composed of E1 (2-oxoglutarate dehydrogenase), E2 (dihydrolipoamide succinyltransferase) and E3 (dihydrolipoamide dehydrogenase); the complex contains multiple copies of the three enzymatic components (E1, E2 and E3). Requires (R)-lipoate as cofactor.

It carries out the reaction N(6)-[(R)-dihydrolipoyl]-L-lysyl-[protein] + succinyl-CoA = N(6)-[(R)-S(8)-succinyldihydrolipoyl]-L-lysyl-[protein] + CoA. It functions in the pathway amino-acid degradation; L-lysine degradation via saccharopine pathway; glutaryl-CoA from L-lysine: step 6/6. E2 component of the 2-oxoglutarate dehydrogenase (OGDH) complex which catalyzes the second step in the conversion of 2-oxoglutarate to succinyl-CoA and CO(2). This Azotobacter vinelandii protein is Dihydrolipoyllysine-residue succinyltransferase component of 2-oxoglutarate dehydrogenase complex (sucB).